A 91-amino-acid polypeptide reads, in one-letter code: Small ribosomal subunit protein bS20 (91 aa).

This sequence belongs to the bacterial ribosomal protein bS20 family.

Its function is as follows. Binds directly to 16S ribosomal RNA. In Caulobacter sp. (strain K31), this protein is Small ribosomal subunit protein bS20.